The chain runs to 318 residues: Cobalamin biosynthesis protein CobD (318 aa).

Transmembrane regions (helical) follow at residues 51 to 71 (VGGVLLLLLAVGITAGAAWGA), 77 to 97 (LVHPLAGVVVSALLGWTCLAA), 153 to 173 (DGVIAPLLFFMIGGAPLALAY), 206 to 226 (LIPARLTGLLMTLAAPLAGLS), and 296 to 316 (MYGAECLLVLLAAVMTTILTI).

This sequence belongs to the CobD/CbiB family.

The protein localises to the cell membrane. It functions in the pathway cofactor biosynthesis; adenosylcobalamin biosynthesis. In terms of biological role, converts cobyric acid to cobinamide by the addition of aminopropanol on the F carboxylic group. The polypeptide is Cobalamin biosynthesis protein CobD (Geobacter metallireducens (strain ATCC 53774 / DSM 7210 / GS-15)).